Consider the following 494-residue polypeptide: UPF0371 protein SPG_0310 (494 aa).

This sequence belongs to the UPF0371 family.

This is UPF0371 protein SPG_0310 from Streptococcus pneumoniae serotype 19F (strain G54).